The chain runs to 407 residues: MIGASKLIRIWINARVYPAIAGAEIINDAVIVAKEGRLTFVGPASALSIDDRDAETIDCGGRLITPGLVDCHTHIVFGGDRAMEFEMRLEGSTYEEVARAGGGIVSSVKATNALTVDQLVQASLPRVDTLLSEGVSTLEIKSGYGLTIEGELNILRAARALEKVRPVRVVTSYLAAHATPPEYKGRHADYIADVVLPGMDRGHAEKLIDAVDGFCEGIAFTVDEMRRVFNHAKVLGIPVKLHAEQLSNLGGAKMAASYGALSADHLEYLDKEGAEAMAKAGTVAVILPGAFYAINETRKPPIQTLRDAGVRMAIATDCNPGTSPLTSLLLTMNMSATLFRLTVEECICGATREAARALGILDTTGTLEVGKSADLAIWNIERPAELVYRIGFNPLHSRVFKGKQVST.

His-72 and His-74 together coordinate Fe(3+). His-72 and His-74 together coordinate Zn(2+). Arg-81, Tyr-144, and His-177 together coordinate 4-imidazolone-5-propanoate. N-formimidoyl-L-glutamate is bound at residue Tyr-144. His-242 contributes to the Fe(3+) binding site. His-242 lines the Zn(2+) pocket. Gln-245 is a 4-imidazolone-5-propanoate binding site. Residue Asp-317 coordinates Fe(3+). Position 317 (Asp-317) interacts with Zn(2+). Residues Asn-319 and Gly-321 each contribute to the N-formimidoyl-L-glutamate site. Thr-322 serves as a coordination point for 4-imidazolone-5-propanoate.

This sequence belongs to the metallo-dependent hydrolases superfamily. HutI family. Zn(2+) is required as a cofactor. Fe(3+) serves as cofactor.

The protein resides in the cytoplasm. The catalysed reaction is 4-imidazolone-5-propanoate + H2O = N-formimidoyl-L-glutamate. Its pathway is amino-acid degradation; L-histidine degradation into L-glutamate; N-formimidoyl-L-glutamate from L-histidine: step 3/3. Catalyzes the hydrolytic cleavage of the carbon-nitrogen bond in imidazolone-5-propanoate to yield N-formimidoyl-L-glutamate. It is the third step in the universal histidine degradation pathway. This chain is Imidazolonepropionase, found in Rhizobium rhizogenes (Agrobacterium rhizogenes).